A 363-amino-acid chain; its full sequence is uncharacterized protein (363 aa).

The stretch at 109 to 329 forms a coiled coil; sequence RAALRELRSR…VEELQAQTRE (221 aa).

This is an uncharacterized protein from Homo sapiens (Human).